Here is a 328-residue protein sequence, read N- to C-terminus: Homoarginine-6-hydroxylase 2-ODD-233 (328 aa).

In terms of domain architecture, Fe2OG dioxygenase spans 183–288; sequence FWVCRLIGYP…VSVAFFYESN (106 aa). Residues H210, D212, and H268 each contribute to the Fe cation site. R278 is a 2-oxoglutarate binding site.

It belongs to the iron/ascorbate-dependent oxidoreductase family. The cofactor is Fe(2+). Requires L-ascorbate as cofactor. Expressed in roots and shoots.

The protein localises to the cytoplasm. It carries out the reaction L-homoarginine + 2-oxoglutarate + O2 = 6-hydroxy-L-homoarginine + succinate + CO2. It catalyses the reaction melatonin + 2-oxoglutarate + O2 = 2-hydroxymelatonin + succinate + CO2. In terms of biological role, 2-oxoglutarate-dependent dioxygenase catalyzing homoarginine 6-hydroxylation thus producing 6-hydroxy-L-homoarginine. Guanidine (Gd) is in turn synthesized by the spontaneous conversion of 6-hydroxy-L-homoarginine to (S)-2-amino-6-oxohexanoate (RHEA:79843); guanidine is a nitrogen-rich compound that can serve as a defense or signaling substance. Involved in melatonin degradation. Catalyzes the hydroxylation of melatonin to produce 2-hydroxymelatonin. This chain is Homoarginine-6-hydroxylase 2-ODD-233, found in Oryza sativa subsp. japonica (Rice).